The following is a 2512-amino-acid chain: RNA replication protein (2512 aa).

Residues 156–367 (RLTFSKNVAH…RLDVYLDKFL (212 aa)) form the Alphavirus-like MT domain. The OTU domain maps to 683-803 (LTVIQVPGDG…HSHYSLLVPC (121 aa)). Residues 1520-1696 (AIYTSLVAHN…DFVNTEARPL (177 aa)) enclose the (+)RNA virus helicase ATP-binding domain. Residues 1697–1874 (ARTFRSPPDV…HLSLSGGGTT (178 aa)) enclose the (+)RNA virus helicase C-terminal domain. In terms of domain architecture, RdRp catalytic spans 2265-2378 (FDSLEIDIKK…VGEKRDLQCD (114 aa)).

The enzyme catalyses ATP + H2O = ADP + phosphate + H(+). It catalyses the reaction RNA(n) + a ribonucleoside 5'-triphosphate = RNA(n+1) + diphosphate. In terms of biological role, RNA replication. The central part of this protein possibly functions as an ATP-binding helicase (Potential). This chain is RNA replication protein, found in Citrus leprosis virus C (isolate Citrus sinesis/Brazil/Cordeiropolis/2003) (CiLV-C).